The primary structure comprises 148 residues: uncharacterized protein (148 aa).

The N-acetyltransferase domain occupies 8–148 (QVMQEPELKI…DGFLTLILRN (141 aa)).

It belongs to the acetyltransferase family.

This is an uncharacterized protein from Bacillus subtilis (strain 168).